The following is a 415-amino-acid chain: Tyrosine--tRNA ligase (415 aa).

An L-tyrosine-binding site is contributed by Y34. The 'HIGH' region motif lies at 39–48; that stretch reads PTSDSLTVGH. Residues Y164 and Q168 each coordinate L-tyrosine. The short motif at 225 to 229 is the 'KMSKS' region element; that stretch reads KFGKS. K228 is an ATP binding site. Positions 348–414 constitute an S4 RNA-binding domain; the sequence is IPLSEALVKT…GKKNNSLIIL (67 aa).

Belongs to the class-I aminoacyl-tRNA synthetase family. TyrS type 1 subfamily. As to quaternary structure, homodimer.

The protein localises to the cytoplasm. It catalyses the reaction tRNA(Tyr) + L-tyrosine + ATP = L-tyrosyl-tRNA(Tyr) + AMP + diphosphate + H(+). Functionally, catalyzes the attachment of tyrosine to tRNA(Tyr) in a two-step reaction: tyrosine is first activated by ATP to form Tyr-AMP and then transferred to the acceptor end of tRNA(Tyr). This chain is Tyrosine--tRNA ligase, found in Phytoplasma australiense.